Reading from the N-terminus, the 407-residue chain is 1-deoxy-D-xylulose 5-phosphate reductoisomerase (407 aa).

NADPH-binding residues include Thr-25, Gly-26, Ser-27, Ile-28, Asn-53, and Asn-136. Residue Lys-137 participates in 1-deoxy-D-xylulose 5-phosphate binding. Position 138 (Glu-138) interacts with NADPH. Mn(2+) is bound at residue Asp-162. Ser-163, Glu-164, Ser-188, and His-211 together coordinate 1-deoxy-D-xylulose 5-phosphate. Glu-164 serves as a coordination point for Mn(2+). NADPH is bound at residue Gly-217. Positions 224, 229, 230, and 233 each coordinate 1-deoxy-D-xylulose 5-phosphate. Glu-233 contacts Mn(2+).

Belongs to the DXR family. Mg(2+) serves as cofactor. The cofactor is Mn(2+).

The catalysed reaction is 2-C-methyl-D-erythritol 4-phosphate + NADP(+) = 1-deoxy-D-xylulose 5-phosphate + NADPH + H(+). Its pathway is isoprenoid biosynthesis; isopentenyl diphosphate biosynthesis via DXP pathway; isopentenyl diphosphate from 1-deoxy-D-xylulose 5-phosphate: step 1/6. Functionally, catalyzes the NADPH-dependent rearrangement and reduction of 1-deoxy-D-xylulose-5-phosphate (DXP) to 2-C-methyl-D-erythritol 4-phosphate (MEP). The polypeptide is 1-deoxy-D-xylulose 5-phosphate reductoisomerase (Nitrobacter winogradskyi (strain ATCC 25391 / DSM 10237 / CIP 104748 / NCIMB 11846 / Nb-255)).